A 126-amino-acid chain; its full sequence is Aspartate 1-decarboxylase (126 aa).

Serine 25 functions as the Schiff-base intermediate with substrate; via pyruvic acid in the catalytic mechanism. Serine 25 is subject to Pyruvic acid (Ser). Threonine 57 serves as a coordination point for substrate. Tyrosine 58 (proton donor) is an active-site residue. 73-75 (GGA) lines the substrate pocket.

It belongs to the PanD family. In terms of assembly, heterooctamer of four alpha and four beta subunits. Pyruvate serves as cofactor. Post-translationally, is synthesized initially as an inactive proenzyme, which is activated by self-cleavage at a specific serine bond to produce a beta-subunit with a hydroxyl group at its C-terminus and an alpha-subunit with a pyruvoyl group at its N-terminus.

The protein localises to the cytoplasm. The catalysed reaction is L-aspartate + H(+) = beta-alanine + CO2. Its pathway is cofactor biosynthesis; (R)-pantothenate biosynthesis; beta-alanine from L-aspartate: step 1/1. In terms of biological role, catalyzes the pyruvoyl-dependent decarboxylation of aspartate to produce beta-alanine. This Stenotrophomonas maltophilia (strain K279a) protein is Aspartate 1-decarboxylase.